A 377-amino-acid chain; its full sequence is N-acetyldiaminopimelate deacetylase (377 aa).

Residue D69 is part of the active site. Residue E128 is the Proton acceptor of the active site.

This sequence belongs to the peptidase M20A family. N-acetyldiaminopimelate deacetylase subfamily.

It catalyses the reaction N-acetyl-(2S,6S)-2,6-diaminopimelate + H2O = (2S,6S)-2,6-diaminopimelate + acetate. It participates in amino-acid biosynthesis; L-lysine biosynthesis via DAP pathway; LL-2,6-diaminopimelate from (S)-tetrahydrodipicolinate (acetylase route): step 3/3. Functionally, catalyzes the conversion of N-acetyl-diaminopimelate to diaminopimelate and acetate. The protein is N-acetyldiaminopimelate deacetylase of Streptococcus sanguinis (strain SK36).